The sequence spans 127 residues: Protein YwpG (127 aa).

Interacts with both the D1 and D2 domains of dynamin-like protein DynA.

The protein resides in the cell membrane. The sequence is that of Protein YwpG (ywpG) from Bacillus subtilis (strain 168).